Here is a 377-residue protein sequence, read N- to C-terminus: D-alanine--D-alanine ligase (377 aa).

Residues 137 to 346 (KELMTVNGIR…RSQQAEKLIQ (210 aa)) form the ATP-grasp domain. 167-222 (SKQLGEVVFVKAANQGSSVGVSRVTNAEEYENALRDSFQYDEKLLVEKAVESPTEL) is an ATP binding site. Residues Asp-300, Glu-313, and Asn-315 each contribute to the Mg(2+) site.

This sequence belongs to the D-alanine--D-alanine ligase family. Requires Mg(2+) as cofactor. It depends on Mn(2+) as a cofactor.

It is found in the cytoplasm. It carries out the reaction 2 D-alanine + ATP = D-alanyl-D-alanine + ADP + phosphate + H(+). Its pathway is cell wall biogenesis; peptidoglycan biosynthesis. In terms of biological role, cell wall formation. The chain is D-alanine--D-alanine ligase from Oenococcus oeni (strain ATCC BAA-331 / PSU-1).